Here is a 195-residue protein sequence, read N- to C-terminus: uncharacterized protein (195 aa).

One can recognise a Nudix hydrolase domain in the interval 34 to 165 (SHHAAVLIPI…WLDIHRGGVN (132 aa)). The Nudix box signature appears at 72-94 (GKADPQDSSLIETALREAEEEVA). Mg(2+) is bound by residues Glu88 and Glu92.

The protein belongs to the Nudix hydrolase family. PCD1 subfamily. Mn(2+) serves as cofactor. The cofactor is Mg(2+).

In terms of biological role, probably mediates the hydrolysis of some nucleoside diphosphate derivatives. This is an uncharacterized protein from Yersinia enterocolitica serotype O:8 / biotype 1B (strain NCTC 13174 / 8081).